Reading from the N-terminus, the 98-residue chain is uncharacterized protein (98 aa).

Residues 10–30 (LYGFFAVTGVLIASFIIGEIV) traverse the membrane as a helical segment.

It is found in the host membrane. This is an uncharacterized protein from Saccharolobus islandicus (Sulfolobus islandicus).